Consider the following 349-residue polypeptide: Anthranilate phosphoribosyltransferase (349 aa).

5-phospho-alpha-D-ribose 1-diphosphate contacts are provided by residues Gly-82, 85-86, 92-95, 110-118, and Ser-122; these read GD, NVSS, and KHGNRAVSG. Gly-82 is a binding site for anthranilate. Ser-94 lines the Mg(2+) pocket. Asn-113 contributes to the anthranilate binding site. Arg-168 is an anthranilate binding site. Positions 227 and 228 each coordinate Mg(2+).

It belongs to the anthranilate phosphoribosyltransferase family. In terms of assembly, homodimer. The cofactor is Mg(2+).

It carries out the reaction N-(5-phospho-beta-D-ribosyl)anthranilate + diphosphate = 5-phospho-alpha-D-ribose 1-diphosphate + anthranilate. It functions in the pathway amino-acid biosynthesis; L-tryptophan biosynthesis; L-tryptophan from chorismate: step 2/5. Catalyzes the transfer of the phosphoribosyl group of 5-phosphorylribose-1-pyrophosphate (PRPP) to anthranilate to yield N-(5'-phosphoribosyl)-anthranilate (PRA). The sequence is that of Anthranilate phosphoribosyltransferase from Pseudomonas aeruginosa (strain LESB58).